Here is a 466-residue protein sequence, read N- to C-terminus: Putative chitinase (466 aa).

Positions 1–17 (MYLTIWLVSILALGTWG) are cleaved as a signal peptide. Residues 20-380 (FNRFCHYNSW…MAVIHGLNAY (361 aa)) form the GH18 domain. Cysteine 24 and cysteine 49 are joined by a disulfide. Glutamate 141 functions as the Proton donor in the catalytic mechanism. A coiled-coil region spans residues 408–442 (NYRRRNQQEKVAEMEQRIRHLEQELQQSMGNMAYE).

The protein belongs to the glycosyl hydrolase 18 family. As to expression, prismatic layer of shell (at protein level). Expressed primarily in the mantle with highest level in the mantle edge and lower level in the mantle pallium.

The protein resides in the secreted. It carries out the reaction Random endo-hydrolysis of N-acetyl-beta-D-glucosaminide (1-&gt;4)-beta-linkages in chitin and chitodextrins.. The chain is Putative chitinase from Pinctada maxima (Silver-lipped pearl oyster).